A 1196-amino-acid chain; its full sequence is RNA-dependent RNA polymerase 6 (1196 aa).

The protein belongs to the RdRP family. Interacts with SGS3. As to expression, widely expressed.

It is found in the cytoplasmic granule. The protein resides in the nucleus. It catalyses the reaction RNA(n) + a ribonucleoside 5'-triphosphate = RNA(n+1) + diphosphate. Functionally, RNA-dependent RNA polymerase involved in post-transcriptional gene silencing (PTGS). Possesses ssRNA and ssDNA-dependent polymerase activity, but does not have priming activity. Possesses in vitro 3' nucleotidyltransferase activity in the presence of UTP as single nucleotide. Required for the production of 21 nucleotide trans-acting small interfering RNAs (ta-siRNAs) derived from TAS1, TAS2 and TAS3 endogenous transcripts. Acts in the RDR6/SGS3/DCL4/AGO7 ta-siRNA pathway involved in leaf developmental timing. Required for the production of natural siRNAs (nat-siRNAs) derived from cis-natural antisense transcripts. Required for the production of 24 nucleotide nat-siRNAs derived from the stress-related P5CDH-SRO5 antisense gene pair. Required for PTGS induced by transgene direct repeats. Plays an essential role in transitive silencing of transgenes by processing secondary siRNAs. This pathway, which requires DCL2 and DCL4, amplifies silencing by using the target RNA as substrate to generate secondary siRNAs, providing an efficient mechanism for long-distance silencing. Involved in the biogenesis of secondary siRNAs which require 22 nucleotide miRNAs associated to AGO1. Participates synergistically with AS1 and AS2 to proper plant development by repressing the miR165 and miR166 microRNAs (independently of AGO10) that may lead to mRNA degradation of genes in the class III HD-ZIP family. Required for the production of some small RNAs derived from the crucifer-infecting tobamovirus (TMV-cg). Required for sense virus-induced post-transcriptional gene silencing (S-PTGS). This Arabidopsis thaliana (Mouse-ear cress) protein is RNA-dependent RNA polymerase 6 (RDR6).